The chain runs to 212 residues: Pyridoxine/pyridoxamine 5'-phosphate oxidase (212 aa).

Residues 59-64 (RMVLMK), 74-75 (YS), Lys81, and Gln103 each bind FMN. Lys64 serves as a coordination point for substrate. Substrate-binding residues include Tyr121 and Arg125. Residues 138 to 139 (QS) and Trp183 each bind FMN. 189 to 191 (RLH) contacts substrate. Arg193 contributes to the FMN binding site.

It belongs to the pyridoxamine 5'-phosphate oxidase family. In terms of assembly, homodimer. Requires FMN as cofactor.

The catalysed reaction is pyridoxamine 5'-phosphate + O2 + H2O = pyridoxal 5'-phosphate + H2O2 + NH4(+). It catalyses the reaction pyridoxine 5'-phosphate + O2 = pyridoxal 5'-phosphate + H2O2. It participates in cofactor metabolism; pyridoxal 5'-phosphate salvage; pyridoxal 5'-phosphate from pyridoxamine 5'-phosphate: step 1/1. It functions in the pathway cofactor metabolism; pyridoxal 5'-phosphate salvage; pyridoxal 5'-phosphate from pyridoxine 5'-phosphate: step 1/1. Functionally, catalyzes the oxidation of either pyridoxine 5'-phosphate (PNP) or pyridoxamine 5'-phosphate (PMP) into pyridoxal 5'-phosphate (PLP). This Rhodopseudomonas palustris (strain HaA2) protein is Pyridoxine/pyridoxamine 5'-phosphate oxidase.